A 509-amino-acid chain; its full sequence is Angiopoietin-4 (509 aa).

The first 21 residues, 1 to 21 (MLCQPAMLLDGLLLLATMAAA), serve as a signal peptide directing secretion. N-linked (GlcNAc...) asparagine glycosylation is found at Asn-105, Asn-135, Asn-149, Asn-167, Asn-256, Asn-306, Asn-317, and Asn-417. A coiled-coil region spans residues 181 to 269 (LSTNKLERQM…LQQQQQQLTE (89 aa)). In terms of domain architecture, Fibrinogen C-terminal spans 288 to 508 (KTPKPVFQDC…GTRMMLRPMG (221 aa)). The cysteines at positions 297 and 326 are disulfide-linked. Residues 416–436 (VNDSSSSAGRKNSLAPQGTKF) form a disordered region. Residues Cys-450 and Cys-463 are joined by a disulfide bond.

In terms of assembly, homodimer; disulfide-linked. Interacts with TEK/TIE2. In terms of tissue distribution, widely expressed.

It localises to the secreted. In terms of biological role, binds to TEK/TIE2, modulating ANGPT1 signaling. Can induce tyrosine phosphorylation of TEK/TIE2. Promotes endothelial cell survival, migration and angiogenesis. The sequence is that of Angiopoietin-4 (Angpt4) from Mus musculus (Mouse).